Here is a 39-residue protein sequence, read N- to C-terminus: Cytochrome b559 subunit beta (39 aa).

The chain crosses the membrane as a helical span at residues 14-30 (WLAVHGLAVPTVSFLGS). Histidine 18 serves as a coordination point for heme.

It belongs to the PsbE/PsbF family. Heterodimer of an alpha subunit and a beta subunit. PSII is composed of 1 copy each of membrane proteins PsbA, PsbB, PsbC, PsbD, PsbE, PsbF, PsbH, PsbI, PsbJ, PsbK, PsbL, PsbM, PsbT, PsbX, PsbY, PsbZ, Psb30/Ycf12, at least 3 peripheral proteins of the oxygen-evolving complex and a large number of cofactors. It forms dimeric complexes. Requires heme b as cofactor.

It is found in the plastid. The protein localises to the chloroplast thylakoid membrane. Functionally, this b-type cytochrome is tightly associated with the reaction center of photosystem II (PSII). PSII is a light-driven water:plastoquinone oxidoreductase that uses light energy to abstract electrons from H(2)O, generating O(2) and a proton gradient subsequently used for ATP formation. It consists of a core antenna complex that captures photons, and an electron transfer chain that converts photonic excitation into a charge separation. The chain is Cytochrome b559 subunit beta from Lotus japonicus (Lotus corniculatus var. japonicus).